We begin with the raw amino-acid sequence, 270 residues long: DNA-directed RNA polymerase subunit Rpo3 (270 aa).

Residues Cys206, Cys209, and Cys212 each coordinate [3Fe-4S] cluster.

This sequence belongs to the archaeal Rpo3/eukaryotic RPB3 RNA polymerase subunit family. Part of the RNA polymerase complex. The cofactor is [3Fe-4S] cluster.

The protein localises to the cytoplasm. It carries out the reaction RNA(n) + a ribonucleoside 5'-triphosphate = RNA(n+1) + diphosphate. DNA-dependent RNA polymerase (RNAP) catalyzes the transcription of DNA into RNA using the four ribonucleoside triphosphates as substrates. The sequence is that of DNA-directed RNA polymerase subunit Rpo3 from Methanosphaera stadtmanae (strain ATCC 43021 / DSM 3091 / JCM 11832 / MCB-3).